The chain runs to 493 residues: Galactose-1-phosphate uridylyltransferase (493 aa).

This sequence belongs to the galactose-1-phosphate uridylyltransferase type 2 family.

It localises to the cytoplasm. It carries out the reaction alpha-D-galactose 1-phosphate + UDP-alpha-D-glucose = alpha-D-glucose 1-phosphate + UDP-alpha-D-galactose. It functions in the pathway carbohydrate metabolism; galactose metabolism. The sequence is that of Galactose-1-phosphate uridylyltransferase from Streptococcus pneumoniae (strain Hungary19A-6).